Reading from the N-terminus, the 178-residue chain is Prion-like protein doppel (178 aa).

An N-terminal signal peptide occupies residues 1–25; the sequence is MRKHLGGCWLAIVCILLFSQLCSVK. The tract at residues 27-50 is flexible tail; sequence RGIKHRIKWNRKVLPSTSQVTEAR. Positions 51–154 are globular; it reads TAEIRPGAFI…KHCDFWLERG (104 aa). Cystine bridges form between C94-C147 and C108-C142. 2 N-linked (GlcNAc...) asparagine glycosylation sites follow: N98 and N110. Residues 124–141 are cu(2+) binding; the sequence is KQDNKLYQRVLWQLIREL. G154 carries the GPI-anchor amidated glycine lipid modification. A propeptide spans 155–178 (removed in mature form); that stretch reads AGLRVTLDQPMMLCLLVFIWFIVK.

Belongs to the prion family. In terms of processing, N-glycosylated. O-glycosylated. In terms of tissue distribution, strongly expressed in testis. Detected at low levels in ovary, spleen, kidney and mammary gland.

It is found in the cell membrane. In terms of biological role, required for normal acrosome reaction and for normal male fertility. Can bind Cu(2+). In Bos taurus (Bovine), this protein is Prion-like protein doppel (PRND).